The sequence spans 434 residues: Beta-glucuronosyltransferase GlcAT14B (434 aa).

Over Met1–Lys21 the chain is Cytoplasmic. The signal-anchor for type II membrane protein transmembrane segment at Trp22–Leu42 threads the bilayer. Over Ala43 to Arg434 the chain is Lumenal. Asn138, Asn187, Asn316, and Asn392 each carry an N-linked (GlcNAc...) asparagine glycan.

Belongs to the glycosyltransferase 14 family.

The protein resides in the golgi apparatus membrane. Functionally, beta-glucuronosyltransferase involved in the biosynthesis of type II arabinogalactan (AG). Modifies both the beta-1,6-linked galactan and beta-1,3-linked galactan present in type II AG. The polypeptide is Beta-glucuronosyltransferase GlcAT14B (Arabidopsis thaliana (Mouse-ear cress)).